The following is a 122-amino-acid chain: Transcription initiation factor IIA subunit 2 (122 aa).

2 positions are modified to phosphoserine: serine 95 and serine 102.

The protein belongs to the TFIIA subunit 2 family. In terms of assembly, TFIIA is a heterodimer composed of the large TOA1 and a small TOA2 subunits. Interacts with TBP. Interacts with TAF11. Interacts with KAP122.

Its subcellular location is the cytoplasm. It localises to the nucleus. Its function is as follows. TFIIA is a component of the transcription machinery of RNA polymerase II and plays an important role in transcriptional activation. TFIIA in a complex with TBP mediates transcriptional activity. The sequence is that of Transcription initiation factor IIA subunit 2 (TOA2) from Saccharomyces cerevisiae (strain ATCC 204508 / S288c) (Baker's yeast).